The sequence spans 122 residues: Large ribosomal subunit protein uL14c (122 aa).

It belongs to the universal ribosomal protein uL14 family. Part of the 50S ribosomal subunit.

Its subcellular location is the plastid. The protein localises to the chloroplast. Functionally, binds to 23S rRNA. In Anthoceros angustus (Hornwort), this protein is Large ribosomal subunit protein uL14c.